Here is a 525-residue protein sequence, read N- to C-terminus: Phosphoenolpyruvate carboxykinase (ATP) (525 aa).

The substrate site is built by Arg54, Tyr190, and Lys196. ATP-binding positions include Lys196, His215, and 231-239 (GLSGTGKTT). Mn(2+) contacts are provided by Lys196 and His215. Asp252 contacts Mn(2+). Glu280, Arg316, and Thr441 together coordinate ATP. Arg316 contacts substrate.

The protein belongs to the phosphoenolpyruvate carboxykinase (ATP) family. Mn(2+) serves as cofactor.

The protein localises to the cytoplasm. The catalysed reaction is oxaloacetate + ATP = phosphoenolpyruvate + ADP + CO2. It functions in the pathway carbohydrate biosynthesis; gluconeogenesis. In terms of biological role, involved in the gluconeogenesis. Catalyzes the conversion of oxaloacetate (OAA) to phosphoenolpyruvate (PEP) through direct phosphoryl transfer between the nucleoside triphosphate and OAA. The protein is Phosphoenolpyruvate carboxykinase (ATP) of Nitratiruptor sp. (strain SB155-2).